The sequence spans 305 residues: Superoxide dismutase [Fe] 2, chloroplastic (305 aa).

A chloroplast-targeting transit peptide spans 1-46 (MMNVAVTATPSSLLYSPLLLPSQGPNRRMQWKRNGKRRLGTKVAVS). Residues His-77, His-129, Asp-228, and His-232 each coordinate Fe cation. The interval 270-305 (AVQREQEGTETEDEENPDDEVPEVYLDSDIDVSEVD) is disordered. Residues 277-305 (GTETEDEENPDDEVPEVYLDSDIDVSEVD) show a composition bias toward acidic residues.

The protein belongs to the iron/manganese superoxide dismutase family. As to quaternary structure, heterodimer with FSD3. Interacts with MRL7 and PRDA1. The cofactor is Fe cation.

It is found in the plastid. Its subcellular location is the chloroplast thylakoid. The enzyme catalyses 2 superoxide + 2 H(+) = H2O2 + O2. Its activity is regulated as follows. Activated by cpn20/cpn21 (in vitro). Destroys superoxide anion radicals which are normally produced within the cells and which are toxic to biological systems. Plays important role in chloroplast development, particularly in the maintenance of thylakoids membranes. Seems to act as a heterodimer with FSD3. The polypeptide is Superoxide dismutase [Fe] 2, chloroplastic (FSD2) (Arabidopsis thaliana (Mouse-ear cress)).